The chain runs to 347 residues: Phenylalanine--tRNA ligase alpha subunit (347 aa).

Residue E265 participates in Mg(2+) binding.

The protein belongs to the class-II aminoacyl-tRNA synthetase family. Phe-tRNA synthetase alpha subunit type 1 subfamily. Tetramer of two alpha and two beta subunits. Mg(2+) serves as cofactor.

It is found in the cytoplasm. The catalysed reaction is tRNA(Phe) + L-phenylalanine + ATP = L-phenylalanyl-tRNA(Phe) + AMP + diphosphate + H(+). This Mycolicibacterium vanbaalenii (strain DSM 7251 / JCM 13017 / BCRC 16820 / KCTC 9966 / NRRL B-24157 / PYR-1) (Mycobacterium vanbaalenii) protein is Phenylalanine--tRNA ligase alpha subunit.